We begin with the raw amino-acid sequence, 356 residues long: S-adenosylmethionine:tRNA ribosyltransferase-isomerase (356 aa).

The protein belongs to the QueA family. As to quaternary structure, monomer.

The protein localises to the cytoplasm. It catalyses the reaction 7-aminomethyl-7-carbaguanosine(34) in tRNA + S-adenosyl-L-methionine = epoxyqueuosine(34) in tRNA + adenine + L-methionine + 2 H(+). It participates in tRNA modification; tRNA-queuosine biosynthesis. In terms of biological role, transfers and isomerizes the ribose moiety from AdoMet to the 7-aminomethyl group of 7-deazaguanine (preQ1-tRNA) to give epoxyqueuosine (oQ-tRNA). The protein is S-adenosylmethionine:tRNA ribosyltransferase-isomerase of Shigella boydii serotype 18 (strain CDC 3083-94 / BS512).